The chain runs to 252 residues: 5-oxoprolinase subunit A (252 aa).

Belongs to the LamB/PxpA family. In terms of assembly, forms a complex composed of PxpA, PxpB and PxpC.

The catalysed reaction is 5-oxo-L-proline + ATP + 2 H2O = L-glutamate + ADP + phosphate + H(+). In terms of biological role, catalyzes the cleavage of 5-oxoproline to form L-glutamate coupled to the hydrolysis of ATP to ADP and inorganic phosphate. The chain is 5-oxoprolinase subunit A from Staphylococcus epidermidis (strain ATCC 35984 / DSM 28319 / BCRC 17069 / CCUG 31568 / BM 3577 / RP62A).